Consider the following 82-residue polypeptide: MASPEMEERLRKIIVDQLGVEPEQVVPSASFTKDLNADSLDLVELIMSIEEEFGVEISDEEAEKIQTVADALNYLETHQSNE.

The region spanning 4–79 (PEMEERLRKI…DALNYLETHQ (76 aa)) is the Carrier domain. Ser-39 carries the post-translational modification O-(pantetheine 4'-phosphoryl)serine.

It belongs to the acyl carrier protein (ACP) family. In terms of processing, 4'-phosphopantetheine is transferred from CoA to a specific serine of apo-ACP by AcpS. This modification is essential for activity because fatty acids are bound in thioester linkage to the sulfhydryl of the prosthetic group.

The protein localises to the cytoplasm. The protein operates within lipid metabolism; fatty acid biosynthesis. Functionally, carrier of the growing fatty acid chain in fatty acid biosynthesis. The chain is Acyl carrier protein from Chloroflexus aurantiacus (strain ATCC 29366 / DSM 635 / J-10-fl).